The sequence spans 359 residues: MSNFKSKYHDELIANAAYIGTPGKGILAADESTGTIGKRLASINVENVETNRRALRELLFTAPNVLQYLSGVILFEETLYQSTAAGKPFVDVLNEAGVLPGIKVDKGTVELAGTDGETTTQGLDGLGARCAKYYEAGARFAKWRAVLKIGPNEPSLSILSIENAYGLARYAVICQENGLVPIVELEILVDGSHDIHKCAAITERVLAATYKALSDHHVLLEGTLLKPNMVTPGSDSPKVAPEVVAEHTVRALQRTVPAAVPAVVFLSGGQSEEEATVNLNAINQVKGKKPWTLSFSFGRALQQSTLKAWSGKEENVKNAQDALLTRAKANSEATLGTYKGNSQLGEGASESLHVKDYKY.

Arginine 52 and lysine 142 together coordinate substrate. Residue glutamate 184 is the Proton acceptor of the active site. Lysine 226 functions as the Schiff-base intermediate with dihydroxyacetone-P in the catalytic mechanism.

Belongs to the class I fructose-bisphosphate aldolase family.

The protein resides in the cytoplasm. It carries out the reaction beta-D-fructose 1,6-bisphosphate = D-glyceraldehyde 3-phosphate + dihydroxyacetone phosphate. The protein operates within carbohydrate degradation; glycolysis; D-glyceraldehyde 3-phosphate and glycerone phosphate from D-glucose: step 4/4. This is Fructose-bisphosphate aldolase, cytoplasmic isozyme (ALDC) from Cicer arietinum (Chickpea).